A 955-amino-acid chain; its full sequence is Protein translocase subunit SecA (955 aa).

ATP-binding positions include Gln-90, 108–112, and Asp-509; that span reads GEGKT. The tract at residues 537-571 is disordered; that stretch reads EGHRPPVPLQRSGAEGGGGFAAKAAPASGPHGHAP. A compositionally biased stretch (low complexity) spans 557-571; that stretch reads AAKAAPASGPHGHAP.

It belongs to the SecA family. As to quaternary structure, monomer and homodimer. Part of the essential Sec protein translocation apparatus which comprises SecA, SecYEG and auxiliary proteins SecDF. Other proteins may also be involved.

The protein localises to the cell inner membrane. It is found in the cellular thylakoid membrane. The protein resides in the cytoplasm. The catalysed reaction is ATP + H2O + cellular proteinSide 1 = ADP + phosphate + cellular proteinSide 2.. Part of the Sec protein translocase complex. Interacts with the SecYEG preprotein conducting channel. Has a central role in coupling the hydrolysis of ATP to the transfer of proteins into and across the cell membrane, serving as an ATP-driven molecular motor driving the stepwise translocation of polypeptide chains across the membrane. Its function is as follows. Probably participates in protein translocation into and across both the cytoplasmic and thylakoid membranes in cyanobacterial cells. The chain is Protein translocase subunit SecA from Synechococcus sp. (strain WH7803).